A 311-amino-acid polypeptide reads, in one-letter code: Energy-coupling factor transporter ATP-binding protein EcfA (311 aa).

The ABC transporter domain maps to 2 to 237; the sequence is IELRDLSYSY…AELIRRASLR (236 aa). Residue 35–42 coordinates ATP; it reads GPNGAGKS.

Belongs to the ABC transporter superfamily. Energy-coupling factor EcfA family. Forms a stable energy-coupling factor (ECF) transporter complex composed of 2 membrane-embedded substrate-binding proteins (S component), 2 ATP-binding proteins (A component) and 2 transmembrane proteins (T component).

The protein localises to the cell membrane. Its function is as follows. ATP-binding (A) component of a common energy-coupling factor (ECF) ABC-transporter complex. Unlike classic ABC transporters this ECF transporter provides the energy necessary to transport a number of different substrates. This is Energy-coupling factor transporter ATP-binding protein EcfA from Methanothermobacter thermautotrophicus (strain ATCC 29096 / DSM 1053 / JCM 10044 / NBRC 100330 / Delta H) (Methanobacterium thermoautotrophicum).